Here is a 253-residue protein sequence, read N- to C-terminus: MGRKFFVGGNWKCNGTTDQVEKIVKTLNEGQVPPSDVVEVVVSPPYVFLPVVKSQLRQEFHVAAQNCWVKKGGAFTGEVSAEMLVNLGVPWVILGHSERRALLGESNEFVGDKVAYALSQGLKVIACVGETLEQREAGSTMDVVAAQTKAIAEKIKDWSNVVVAYEPVWAIGTGKVATPAQAQEVHASLRDWLKTNASPEVAESTRIIYGGSVTAANCKELAAQPDVDGFLVGGASLKPEFIDIINAATVKSA.

Asparagine 10 and lysine 12 together coordinate substrate. Histidine 96 (electrophile) is an active-site residue. Residue glutamate 166 is the Proton acceptor of the active site.

It belongs to the triosephosphate isomerase family. In terms of assembly, homodimer.

The protein localises to the cytoplasm. It carries out the reaction D-glyceraldehyde 3-phosphate = dihydroxyacetone phosphate. It participates in carbohydrate biosynthesis; gluconeogenesis. The protein operates within carbohydrate degradation; glycolysis; D-glyceraldehyde 3-phosphate from glycerone phosphate: step 1/1. The protein is Triosephosphate isomerase, cytosolic of Zea mays (Maize).